The following is a 690-amino-acid chain: Xylosyl- and glucuronyltransferase LARGE2 (690 aa).

Residues 1 to 7 (MLPRGRP) lie on the Cytoplasmic side of the membrane. A helical; Signal-anchor for type II membrane protein membrane pass occupies residues 8 to 28 (RALGAALLLLLLLVVGFFLFG). The Lumenal segment spans residues 29–690 (RDPEYGLGTT…TALQQSRSRA (662 aa)). Residues asparagine 50 and asparagine 77 are each glycosylated (N-linked (GlcNAc...) asparagine). Residues 67 to 342 (LHVAIVCAGY…FLGFDGKLLC (276 aa)) form a xylosyltransferase activity region. Aspartate 171 and aspartate 173 together coordinate Mn(2+). Asparagine 201 carries N-linked (GlcNAc...) asparagine glycosylation. Residues 343–686 (RELFGCPNQF…LKYLTALQQS (344 aa)) are glucuronyltransferase activity. Residues aspartate 491 and aspartate 493 each coordinate Mn(2+).

This sequence in the C-terminal section; belongs to the glycosyltransferase 49 family. In the N-terminal section; belongs to the glycosyltransferase 8 family. Interacts with B4GAT1. Requires Mn(2+) as cofactor.

Its subcellular location is the golgi apparatus membrane. It carries out the reaction 3-O-[beta-D-GlcA-(1-&gt;3)-beta-D-Xyl-(1-&gt;4)-Rib-ol-P-Rib-ol-P-3-beta-D-GalNAc-(1-&gt;3)-beta-D-GlcNAc-(1-&gt;4)-(O-6-P-alpha-D-Man)]-Thr-[protein] + UDP-alpha-D-xylose = 3-O-[alpha-D-Xyl-(1-&gt;3)-beta-D-GlcA-(1-&gt;4)-beta-D-Xyl-(1-&gt;4)-Rib-ol-P-Rib-ol-P-3-beta-D-GalNAc-(1-&gt;3)-beta-D-GlcNAc-(1-&gt;4)-(O-6-P-alpha-D-Man)]-Thr-[protein] + UDP + H(+). It catalyses the reaction 3-O-{(1-&gt;[3)-alpha-D-Xyl-(1-&gt;3)-beta-D-GlcA-(1-&gt;](n)-4)-beta-D-Xyl-(1-&gt;4)-Rib-ol-P-Rib-ol-P-3-beta-D-GalNAc-(1-&gt;3)-beta-D-GlcNAc-(1-&gt;4)-O-6-P-alpha-D-Man}-L-Thr-[protein] + UDP-alpha-D-glucuronate = 3-O-{beta-D-GlcA-(1-&gt;[3)-alpha-D-Xyl-(1-&gt;3)-beta-D-GlcA-(1-&gt;](n)-4)-beta-D-Xyl-(1-&gt;4)-Rib-ol-P-Rib-ol-P-3-beta-D-GalNAc-(1-&gt;3)-beta-D-GlcNAc-(1-&gt;4)-O-6-P-alpha-D-Man}-L-Thr-[protein] + UDP + H(+). The catalysed reaction is 3-O-{beta-D-GlcA-(1-&gt;[3)-alpha-D-Xyl-(1-&gt;3)-beta-D-GlcA-(1-&gt;](n)-4)-beta-D-Xyl-(1-&gt;4)-Rib-ol-P-Rib-ol-P-3-beta-D-GalNAc-(1-&gt;3)-beta-D-GlcNAc-(1-&gt;4)-O-6-P-alpha-D-Man}-L-Thr-[protein] + UDP-alpha-D-xylose = 3-O-{(1-&gt;[3)-alpha-D-Xyl-(1-&gt;3)-beta-D-GlcA-(1-&gt;](n+1)-4)-beta-D-Xyl-(1-&gt;4)-Rib-ol-P-Rib-ol-P-3-beta-D-GalNAc-(1-&gt;3)-beta-D-GlcNAc-(1-&gt;4)-O-6-P-alpha-D-Man}-L-Thr-[protein] + UDP + H(+). The protein operates within protein modification; protein glycosylation. In terms of biological role, bifunctional glycosyltransferase with both alpha-1,3-xylosyltransferase and beta-1,3-glucuronyltransferase activities involved in the maturation of alpha-dystroglycan (DAG1) by glycosylation leading to DAG1 binding to laminin G-like domain-containing extracellular proteins with high affinity and in a phosphorylated-O-mannosyl trisaccharide dependent manner. Elongates the glucuronyl-beta-1,4-xylose-beta disaccharide primer structure by adding repeating units [-3-Xylose-alpha-1,3-GlcA-beta-1-] to produce a heteropolysaccharide. Supports the maturation of DAG1 more effectively than LARGE1. In addition, can modify both heparan sulfate (HS)- and chondroitin/dermatan sulfate (CS/DS)-proteoglycans (PGs), namely GPC4, with a glycosaminoglycan (GAG)-like polysaccharide composed of xylose and glucuronic acid to confer laminin binding. The polypeptide is Xylosyl- and glucuronyltransferase LARGE2 (Rattus norvegicus (Rat)).